We begin with the raw amino-acid sequence, 192 residues long: MLTLPESLRDAFKEPLGPVTIDADELLAAAAETRGERAAPDAPIIAVGDVVTYHLREAGRVPDVALIDGKTERETVDAEIGSALAAADDRRLSVENPAASLSAELLEALSEALSDADPVIIEVTGEEDLAALPAILAAPDGASVVYGQPGEGMVRVAVTPESRTEARELFEALDGDVEAAYKALGRVPDGDR.

The GTP site is built by aspartate 49, valine 50, valine 51, aspartate 68, lysine 70, and glutamate 127.

This sequence belongs to the GTP-dependent DPCK family.

It carries out the reaction 3'-dephospho-CoA + GTP = GDP + CoA + H(+). It functions in the pathway cofactor biosynthesis; coenzyme A biosynthesis. In terms of biological role, catalyzes the GTP-dependent phosphorylation of the 3'-hydroxyl group of dephosphocoenzyme A to form coenzyme A (CoA). This chain is GTP-dependent dephospho-CoA kinase, found in Halorubrum lacusprofundi (strain ATCC 49239 / DSM 5036 / JCM 8891 / ACAM 34).